The sequence spans 278 residues: Envelope glycoprotein L (278 aa).

The N-terminal stretch at 1-30 is a signal peptide; the sequence is MCRRPDCGFSFSPGPVILLWCCLLLPIVSS. In terms of domain architecture, gL betaherpesvirus-type spans 43-256; it reads VPAECPELTR…DKYYAGLPPE (214 aa). Cysteine 154 and cysteine 159 are oxidised to a cystine.

Belongs to the herpesviridae glycoprotein L (gL) family. Betaherpesvirinae gL subfamily. In terms of assembly, interacts with glycoprotein H (gH); this interaction is necessary for the correct processing and cell surface expression of gH. Forms the envelope pentamer complex (PC) composed of gH, gL, UL128, UL130, and UL131A. The pentamer interacts with host NRP2. Forms the envelope trimer complex composed of gH, gL, and gO. The trimer interacts with host PDGFRA. The trimer also interacts with host EPHA2.

Its subcellular location is the virion membrane. The protein localises to the host cell membrane. The protein resides in the host Golgi apparatus. It is found in the host trans-Golgi network. The heterodimer glycoprotein H-glycoprotein L is required for the fusion of viral and plasma membranes leading to virus entry into the host cell. Acts as a functional inhibitor of gH and maintains gH in an inhibited form. Upon binding to host integrins, gL dissociates from gH leading to activation of the viral fusion glycoproteins gB and gH. In human cytomegalovirus, forms two distincts complexes to mediate viral entry, a trimer and a pentamer at the surface of the virion envelope. The gH-gL-gO trimer is required for infection in fibroblasts by interacting with host PDGFRA, and in glioblastoma cells by interacting with host EPHA2. The gH-gL-UL128-UL130-UL131A pentamer is essential for viral entry in epithelial, endothelial and myeloid cells via interaction with host NRP2. In Homo sapiens (Human), this protein is Envelope glycoprotein L.